The primary structure comprises 171 residues: 3-hydroxydecanoyl-[acyl-carrier-protein] dehydratase (171 aa).

His-71 is an active-site residue.

Belongs to the thioester dehydratase family. FabA subfamily. In terms of assembly, homodimer.

It localises to the cytoplasm. It carries out the reaction a (3R)-hydroxyacyl-[ACP] = a (2E)-enoyl-[ACP] + H2O. The catalysed reaction is (3R)-hydroxydecanoyl-[ACP] = (2E)-decenoyl-[ACP] + H2O. It catalyses the reaction (2E)-decenoyl-[ACP] = (3Z)-decenoyl-[ACP]. The protein operates within lipid metabolism; fatty acid biosynthesis. In terms of biological role, necessary for the introduction of cis unsaturation into fatty acids. Catalyzes the dehydration of (3R)-3-hydroxydecanoyl-ACP to E-(2)-decenoyl-ACP and then its isomerization to Z-(3)-decenoyl-ACP. Can catalyze the dehydratase reaction for beta-hydroxyacyl-ACPs with saturated chain lengths up to 16:0, being most active on intermediate chain length. The chain is 3-hydroxydecanoyl-[acyl-carrier-protein] dehydratase from Hamiltonella defensa subsp. Acyrthosiphon pisum (strain 5AT).